The chain runs to 1045 residues: Fibrosin-1-like protein (1045 aa).

Positions 1–12 (MEAKVRPSRRSR) are enriched in basic residues. Disordered stretches follow at residues 1–86 (MEAK…DGFA) and 99–315 (DMAL…THVP). The segment covering 13-28 (AQRDRGRRREAARDAR) has biased composition (basic and acidic residues). The span at 48 to 63 (GLRGAPPRGAAPAPRT) shows a compositional bias: low complexity. A compositionally biased stretch (basic and acidic residues) spans 99–123 (DMALKPHERKEKWERRLIKKPRESE). Polar residues predominate over residues 183–197 (EATSSRDPLSDSSAH). Positions 270-280 (HAAPCPGPPPG) are enriched in pro residues. Position 340 is a phosphoserine (Ser-340). Residues 443–457 (QHTHQHTHQHTHQHQ) show a composition bias toward basic residues. 2 disordered regions span residues 443–462 (QHTHQHTHQHTHQHQHTFAP) and 719–753 (EGSSVHGLPSPHEAWNRLHRAPPSFPAPPPWPKSV). Pro residues predominate over residues 741–750 (PSFPAPPPWP). Residue Ser-790 is modified to Phosphoserine. Disordered regions lie at residues 809–880 (ELGR…APLQ) and 910–961 (AAAP…PALD). Over residues 817–837 (AEREAEPRVKESRSPAKEEAA) the composition is skewed to basic and acidic residues. A Glycyl lysine isopeptide (Lys-Gly) (interchain with G-Cter in SUMO2) cross-link involves residue Lys-858. Positions 910–922 (AAAPAPGSAALLE) are enriched in low complexity. A compositionally biased stretch (basic and acidic residues) spans 923–949 (PPERPYRDREPHGYSPERLRGELERAR). A phosphoserine mark is found at Ser-937 and Ser-977. 2 positions are modified to phosphothreonine: Thr-989 and Thr-1010. Residues 991 to 1045 (PAAAALGAPPPLVTAAGPPTPPGPPRSRTTPLGGLGPGEARDYSPSRNPPEVEAR) form a disordered region. Residues 998-1015 (APPPLVTAAGPPTPPGPP) are compositionally biased toward pro residues. Basic and acidic residues predominate over residues 1029-1045 (EARDYSPSRNPPEVEAR).

This sequence belongs to the AUTS2 family.

This chain is Fibrosin-1-like protein (FBRSL1), found in Homo sapiens (Human).